Reading from the N-terminus, the 122-residue chain is Glycine cleavage system H protein (122 aa).

Positions 19 to 101 constitute a Lipoyl-binding domain; that stretch reads TATIGITKHA…EGNSWLYKIK (83 aa). K60 is modified (N6-lipoyllysine).

The protein belongs to the GcvH family. As to quaternary structure, the glycine cleavage system is composed of four proteins: P, T, L and H. Requires (R)-lipoate as cofactor.

The glycine cleavage system catalyzes the degradation of glycine. The H protein shuttles the methylamine group of glycine from the P protein to the T protein. The sequence is that of Glycine cleavage system H protein from Dinoroseobacter shibae (strain DSM 16493 / NCIMB 14021 / DFL 12).